The sequence spans 164 residues: Endoribonuclease YbeY (164 aa).

Zn(2+)-binding residues include H124, H128, and H134.

Belongs to the endoribonuclease YbeY family. The cofactor is Zn(2+).

It is found in the cytoplasm. Functionally, single strand-specific metallo-endoribonuclease involved in late-stage 70S ribosome quality control and in maturation of the 3' terminus of the 16S rRNA. The polypeptide is Endoribonuclease YbeY (Nitrosomonas europaea (strain ATCC 19718 / CIP 103999 / KCTC 2705 / NBRC 14298)).